The chain runs to 242 residues: Biosynthetic peptidoglycan transglycosylase (242 aa).

A helical membrane pass occupies residues 21–41 (VALVVFWGGGIALFSVVPVPF).

The protein belongs to the glycosyltransferase 51 family.

The protein localises to the cell inner membrane. It carries out the reaction [GlcNAc-(1-&gt;4)-Mur2Ac(oyl-L-Ala-gamma-D-Glu-L-Lys-D-Ala-D-Ala)](n)-di-trans,octa-cis-undecaprenyl diphosphate + beta-D-GlcNAc-(1-&gt;4)-Mur2Ac(oyl-L-Ala-gamma-D-Glu-L-Lys-D-Ala-D-Ala)-di-trans,octa-cis-undecaprenyl diphosphate = [GlcNAc-(1-&gt;4)-Mur2Ac(oyl-L-Ala-gamma-D-Glu-L-Lys-D-Ala-D-Ala)](n+1)-di-trans,octa-cis-undecaprenyl diphosphate + di-trans,octa-cis-undecaprenyl diphosphate + H(+). The protein operates within cell wall biogenesis; peptidoglycan biosynthesis. Its function is as follows. Peptidoglycan polymerase that catalyzes glycan chain elongation from lipid-linked precursors. The polypeptide is Biosynthetic peptidoglycan transglycosylase (Salmonella arizonae (strain ATCC BAA-731 / CDC346-86 / RSK2980)).